We begin with the raw amino-acid sequence, 411 residues long: MSGASSVSSICSSNVSLIPTGPQVFINFRGKDLRKGFMSFLKPALKKEKINVFIDEQEERGKYLISLFDTIGESKIALVIFSEGYCESHWCMDELVKIKEYMDQNRLIIIPIFYRLDLDVVKDLTGKFGDNFWDLVDKYQPEPKKLHKWTEALFSVCELFSLILPKHSDISDRDFVKSIVKAVKKVQKNFFQRRNGEIEYQDFSVPACKLTITMHESPNEEAVQVTVLNEFYQMKNQSPVPSYEFKFWVDLTRPKGNVFMIDARDLSIAWSEDSNHWTWLPLPNQNSNESVMEIAFLKSASWLDVAGKFDTRYLTPRTRYEVVFVVKLEYTFEWETLVKLKLDLPNTWEKPQEQSVDMFDYISDQWLDIPVGEFTTSKKNVGEISFAMYEHECQLWKSGLFVKGVTIRPKY.

Residues 20 to 157 (TGPQVFINFR…KWTEALFSVC (138 aa)) enclose the TIR domain. E94 is an active-site residue.

The catalysed reaction is NAD(+) + H2O = ADP-D-ribose + nicotinamide + H(+). This is Protein PHLOEM PROTEIN 2-LIKE A5 (PP2A5) from Arabidopsis thaliana (Mouse-ear cress).